A 339-amino-acid polypeptide reads, in one-letter code: Sperm acrosome membrane-associated protein 6 (339 aa).

The signal sequence occupies residues 1–41 (MTSQRSLSSPQTRRPSVMGLISLVGSIVLLFLLIFRASTWA). The CXXC motif signature appears at 42–45 (CLFC). 6 disulfides stabilise this stretch: Cys-42-Cys-155, Cys-45-Cys-158, Cys-56-Cys-70, Cys-140-Cys-163, Cys-144-Cys-169, and Cys-186-Cys-241. Over 42–310 (CLFCFTTYEE…NPQALTLGNL (269 aa)) the chain is Extracellular. A CXXC motif motif is present at residues 155–158 (CSGC). The 86-residue stretch at 166–251 (PLDCPVQDML…VILHDQRPLA (86 aa)) folds into the Ig-like domain. Residue Asn-258 is glycosylated (N-linked (GlcNAc...) asparagine). A helical transmembrane segment spans residues 311–331 (FLLAATAALGSASVTLLVWLF). At 332 to 339 (FRWYLSGN) the chain is on the cytoplasmic side.

The protein belongs to the SPACA6 family. Forms a complex with IZUMO1 and TMEM81 on spermatocyte cell membrane required for fertilization. Highly expressed in testis. Minor expression also detected in epididymis, seminal vesicle and ovary. Predominantly expressed in testicular germ cells during spermiogenesis. Most abundant in round spermatids and detected at lower levels in elongating spermatids.

It is found in the cytoplasmic vesicle. Its subcellular location is the secretory vesicle. The protein localises to the acrosome membrane. Sperm protein required for fusion of sperm with the egg membrane during fertilization. May regulate the expression of sperm surface protein DCST2. This Mus musculus (Mouse) protein is Sperm acrosome membrane-associated protein 6.